Consider the following 228-residue polypeptide: Phosphoribosylformylglycinamidine synthase subunit PurQ (228 aa).

The region spanning 3-226 (FAVIVFPGSN…VNYWRETHVV (224 aa)) is the Glutamine amidotransferase type-1 domain. Residue cysteine 86 is the Nucleophile of the active site. Active-site residues include histidine 195 and glutamate 197.

In terms of assembly, part of the FGAM synthase complex composed of 1 PurL, 1 PurQ and 2 PurS subunits.

It localises to the cytoplasm. It catalyses the reaction N(2)-formyl-N(1)-(5-phospho-beta-D-ribosyl)glycinamide + L-glutamine + ATP + H2O = 2-formamido-N(1)-(5-O-phospho-beta-D-ribosyl)acetamidine + L-glutamate + ADP + phosphate + H(+). It carries out the reaction L-glutamine + H2O = L-glutamate + NH4(+). It participates in purine metabolism; IMP biosynthesis via de novo pathway; 5-amino-1-(5-phospho-D-ribosyl)imidazole from N(2)-formyl-N(1)-(5-phospho-D-ribosyl)glycinamide: step 1/2. In terms of biological role, part of the phosphoribosylformylglycinamidine synthase complex involved in the purines biosynthetic pathway. Catalyzes the ATP-dependent conversion of formylglycinamide ribonucleotide (FGAR) and glutamine to yield formylglycinamidine ribonucleotide (FGAM) and glutamate. The FGAM synthase complex is composed of three subunits. PurQ produces an ammonia molecule by converting glutamine to glutamate. PurL transfers the ammonia molecule to FGAR to form FGAM in an ATP-dependent manner. PurS interacts with PurQ and PurL and is thought to assist in the transfer of the ammonia molecule from PurQ to PurL. The polypeptide is Phosphoribosylformylglycinamidine synthase subunit PurQ (Geobacillus thermodenitrificans (strain NG80-2)).